Here is a 628-residue protein sequence, read N- to C-terminus: Chaperone protein DnaK (628 aa).

T197 is subject to Phosphothreonine; by autocatalysis. Positions 595-604 (AEAMYKKEQG) are enriched in basic and acidic residues. Residues 595 to 628 (AEAMYKKEQGEQAGAQPNQKAKKDDDDVIDAEVE) are disordered.

It belongs to the heat shock protein 70 family.

Acts as a chaperone. This chain is Chaperone protein DnaK, found in Aliarcobacter butzleri (strain RM4018) (Arcobacter butzleri).